A 447-amino-acid chain; its full sequence is Peptide chain release factor 1, mitochondrial (447 aa).

Residues M1–Y63 constitute a mitochondrion transit peptide. Residues P299–I363 form a GGQ domain region. Residues G313–Q315 carry the GGQ motif. Q315 bears the N5-methylglutamine mark.

It belongs to the prokaryotic/mitochondrial release factor family. Post-translationally, methylation of glutamine in the GGQ triplet by HEMK1 is conserved from bacteria to mammals.

The protein localises to the mitochondrion. Mitochondrial peptide chain release factor that directs the termination of translation in response to the peptide chain non-canonical stop codons AGG and AGA. Non-canonical termination codons AGG and AGA are found at the end of MT-CO1/COX1 and MT-ND6/ND6 open reading frames, respectively. Recognizes non-canonical stop codons via a network of interactions between the codon, MTRF1 and the ribosomal RNA (rRNA): in contrast to other translation release factors, which identify the codon in the A-site via direct interactions of amino acid side chains with the bases, MTRF1 repositions the first 2 bases of the stop codon to use an intricate network of interactions that includes residues of the release factor, the rRNA of the small ribosomal subunit, as well as neighboring bases of the mRNA. The chain is Peptide chain release factor 1, mitochondrial (MTRF1) from Bos taurus (Bovine).